A 447-amino-acid polypeptide reads, in one-letter code: Ribosomal protein uS12 methylthiotransferase RimO (447 aa).

The MTTase N-terminal domain occupies 6–122 (EKVSMVSLGC…IAEIIEEKSS (117 aa)). [4Fe-4S] cluster is bound by residues cysteine 15, cysteine 51, cysteine 85, cysteine 160, cysteine 164, and cysteine 167. Positions 146 to 376 (SSPAYTAYLK…MKAQARVSFK (231 aa)) constitute a Radical SAM core domain. A TRAM domain is found at 379-447 (RRLIDTEEQV…DYDLIGEIIS (69 aa)).

This sequence belongs to the methylthiotransferase family. RimO subfamily. Requires [4Fe-4S] cluster as cofactor.

The protein resides in the cytoplasm. The enzyme catalyses L-aspartate(89)-[ribosomal protein uS12]-hydrogen + (sulfur carrier)-SH + AH2 + 2 S-adenosyl-L-methionine = 3-methylsulfanyl-L-aspartate(89)-[ribosomal protein uS12]-hydrogen + (sulfur carrier)-H + 5'-deoxyadenosine + L-methionine + A + S-adenosyl-L-homocysteine + 2 H(+). Functionally, catalyzes the methylthiolation of an aspartic acid residue of ribosomal protein uS12. The protein is Ribosomal protein uS12 methylthiotransferase RimO of Geobacter sulfurreducens (strain ATCC 51573 / DSM 12127 / PCA).